A 964-amino-acid chain; its full sequence is SKI family transcriptional corepressor 1 (964 aa).

Disordered regions lie at residues 45-72 (TQLG…SSAL), 278-365 (RTFS…GGSA), 414-452 (AGEP…PGPG), 525-587 (AGGG…RKSS), 610-766 (REAY…GPAA), and 793-842 (YLCT…EDGL). Residues 283-310 (QGGGGGGANSGSGGAGKGGAGGGGGPGC) are compositionally biased toward gly residues. Residues 345 to 355 (ALGLAAAANGP) show a composition bias toward low complexity. Composition is skewed to gly residues over residues 356 to 365 (AGPGGPGGSA) and 417 to 440 (PKGG…GPGA). Residues 571-583 (SLAPLAPPPPPPA) are compositionally biased toward pro residues. Residues 652–661 (DTADEPEVDV) show a composition bias toward acidic residues. Residues 798–808 (ETHEPDKEDNH) are compositionally biased toward basic and acidic residues. Residues 823-834 (DQRSVSQPSPAN) are compositionally biased toward polar residues. Residues 857–921 (ENLAREELQK…DTLCNELDQE (65 aa)) adopt a coiled-coil conformation.

The protein belongs to the SKI family. In terms of assembly, interacts with LBX1. Interacts with SMAD1, SMAD2 and SMAD3.

It localises to the nucleus. Functionally, inhibits BMP signaling. Acts as a transcriptional corepressor of LBX1. In Rattus norvegicus (Rat), this protein is SKI family transcriptional corepressor 1 (Skor1).